The following is a 24-amino-acid chain: Coenzyme PQQ synthesis protein A (24 aa).

The segment at residues Glu16–Tyr20 is a cross-link (pyrroloquinoline quinone (Glu-Tyr)).

It belongs to the PqqA family.

It participates in cofactor biosynthesis; pyrroloquinoline quinone biosynthesis. Required for coenzyme pyrroloquinoline quinone (PQQ) biosynthesis. PQQ is probably formed by cross-linking a specific glutamate to a specific tyrosine residue and excising these residues from the peptide. This chain is Coenzyme PQQ synthesis protein A, found in Pseudomonas syringae pv. syringae (strain B728a).